The following is a 200-amino-acid chain: Cytochrome c biogenesis ATP-binding export protein CcmA (200 aa).

Positions 3 to 200 (LSGRGLRCVR…AREMRIGAAA (198 aa)) constitute an ABC transporter domain. 35-42 (GHNGAGKT) is an ATP binding site.

It belongs to the ABC transporter superfamily. CcmA exporter (TC 3.A.1.107) family. The complex is composed of two ATP-binding proteins (CcmA) and two transmembrane proteins (CcmB).

It localises to the cell inner membrane. It carries out the reaction heme b(in) + ATP + H2O = heme b(out) + ADP + phosphate + H(+). Its function is as follows. Part of the ABC transporter complex CcmAB involved in the biogenesis of c-type cytochromes; once thought to export heme, this seems not to be the case, but its exact role is uncertain. Responsible for energy coupling to the transport system. In Rhodopseudomonas palustris (strain BisB5), this protein is Cytochrome c biogenesis ATP-binding export protein CcmA.